The sequence spans 143 residues: MRRVYTNRRAHHEYELLERFEAGIALTGSEVKSVRAGGVDFRDAFARLNNGNVELEGLYIPTYTEATYNNHEPRRTRRLLLHREEIGKLKRALEQKGLTLVPTRLYQKGRVFKVELALARGKKLHDKRRAEAEKTLRRELREL.

This sequence belongs to the SmpB family.

The protein resides in the cytoplasm. Required for rescue of stalled ribosomes mediated by trans-translation. Binds to transfer-messenger RNA (tmRNA), required for stable association of tmRNA with ribosomes. tmRNA and SmpB together mimic tRNA shape, replacing the anticodon stem-loop with SmpB. tmRNA is encoded by the ssrA gene; the 2 termini fold to resemble tRNA(Ala) and it encodes a 'tag peptide', a short internal open reading frame. During trans-translation Ala-aminoacylated tmRNA acts like a tRNA, entering the A-site of stalled ribosomes, displacing the stalled mRNA. The ribosome then switches to translate the ORF on the tmRNA; the nascent peptide is terminated with the 'tag peptide' encoded by the tmRNA and targeted for degradation. The ribosome is freed to recommence translation, which seems to be the essential function of trans-translation. This chain is SsrA-binding protein, found in Deinococcus geothermalis (strain DSM 11300 / CIP 105573 / AG-3a).